Consider the following 348-residue polypeptide: WW domain binding protein 1-like (348 aa).

Residues L42 to H62 form a helical membrane-spanning segment. Disordered regions lie at residues V111–T253 and C306–S348. A compositionally biased stretch (pro residues) spans L134–Q155. Residues G156–S177 show a composition bias toward low complexity. S177 carries the phosphoserine modification. A compositionally biased stretch (basic and acidic residues) spans S220–R234. Positions N331 to S348 are enriched in polar residues.

It is found in the membrane. The sequence is that of WW domain binding protein 1-like (Wbp1l) from Mus musculus (Mouse).